The sequence spans 332 residues: CMRF35-like molecule 9 (332 aa).

The N-terminal stretch at Met1–Ala18 is a signal peptide. The Ig-like V-type domain occupies Leu19–Ser121. At Leu19–Arg247 the chain is on the extracellular side. Residues Cys37 and Cys107 are joined by a disulfide bond. N-linked (GlcNAc...) asparagine glycosylation occurs at Asn96. Thr137, Thr143, Thr144, Thr155, Thr161, Thr170, Thr171, Thr177, Thr187, and Thr195 each carry an O-linked (GalNAc...) threonine glycan. Residues Leu146–Pro239 form a disordered region. Positions Gln147 to Pro158 are enriched in low complexity. Residues Ala168 to Ala181 show a composition bias toward low complexity. A compositionally biased stretch (polar residues) spans Gly186–Pro205. The O-linked (GalNAc...) serine glycan is linked to Ser196. O-linked (GalNAc...) threonine glycosylation is found at Thr199 and Thr201. Ser202 carries an O-linked (GalNAc...) serine glycan. A glycan (O-linked (GalNAc...) threonine) is linked at Thr207. Residues Ser208, Ser213, Ser214, and Ser222 are each glycosylated (O-linked (GalNAc...) serine). The segment covering Leu220–Pro239 has biased composition (polar residues). Thr223 carries O-linked (GalNAc...) threonine glycosylation. A glycan (O-linked (GalNAc...) serine) is linked at Ser224. An O-linked (GalNAc...) threonine glycan is attached at Thr228. O-linked (GalNAc...) serine glycosylation is found at Ser229 and Ser237. A helical transmembrane segment spans residues Ile248 to Cys268. Residues Ser269–Ala332 lie on the Cytoplasmic side of the membrane.

Belongs to the CD300 family. Post-translationally, O-glycosylated with sialylated oligosaccharides. Highly expressed in heart, skeletal muscle and placenta.

Its subcellular location is the apical cell membrane. The protein localises to the basolateral cell membrane. It localises to the endosome. It is found in the multivesicular body membrane. In terms of biological role, receptor which may mediate L-selectin-dependent lymphocyte rollings. Binds SELL in a calcium dependent manner. Binds lymphocyte. This is CMRF35-like molecule 9 (CD300LG) from Homo sapiens (Human).